Here is a 77-residue protein sequence, read N- to C-terminus: uncharacterized protein (77 aa).

The segment covering 1 to 15 (MNRTSESVEPQQNEK) has biased composition (polar residues). Disordered stretches follow at residues 1–20 (MNRT…AVHW) and 31–52 (TYSN…QRTF). Acidic residues predominate over residues 33-44 (SNEDDEDNEEGD).

This is an uncharacterized protein from Schizosaccharomyces pombe (strain 972 / ATCC 24843) (Fission yeast).